The chain runs to 1493 residues: Mitogen-activated protein kinase kinase kinase 1 (1493 aa).

The segment covering 1-23 has biased composition (low complexity); that stretch reads MAAAAGDRASSSGFPGAAAASPE. Disordered stretches follow at residues 1–178 and 194–300; these read MAAA…PEER and HEWL…EETS. The residue at position 2 (Ala-2) is an N-acetylalanine. The residue at position 21 (Ser-21) is a Phosphoserine. Gly residues predominate over residues 24–35; that stretch reads AGGGGGGGGALQ. A compositionally biased stretch (low complexity) spans 36–46; the sequence is GSGAPAAGAAG. Positions 89–99 are enriched in pro residues; the sequence is PPCPSTSPSPE. Residues 140–156 show a composition bias toward low complexity; sequence ARSPAGAEPPSAAAPSG. Residue Ser-142 is modified to Phosphoserine. Residues 157-178 show a composition bias toward basic and acidic residues; it reads REMENKETLKGLHKMEDRPEER. Over residues 235 to 256 the composition is skewed to low complexity; it reads SAAPAPKGRRSPSPGSSPSGRS. Ser-270 is modified (phosphoserine). Position 280 is a phosphothreonine (Thr-280). Phosphoserine occurs at positions 287, 292, and 295. An SWIM-type zinc finger spans residues 333–361; the sequence is YRVFIGPQNCSCGRGAFCIHLLFVMLRVF. A compositionally biased stretch (low complexity) spans 411–428; the sequence is SNSHTLSSSSTSTSSSEN. The tract at residues 411–431 is disordered; it reads SNSHTLSSSSTSTSSSENSIK. An RING-type zinc finger spans residues 438 to 487; sequence CPICLLGMLDEESLTVCEDGCRNKLHHHCMSIWAEECRRNREPLICPLCR. Phosphoserine occurs at positions 502 and 526. Disordered stretches follow at residues 506-531 and 895-914; these read SPAS…RRNQ and EHTV…RLSA. The segment covering 512-527 has biased composition (low complexity); that stretch reads AVQQPSSPQQPVAGSQ. A Phosphoserine modification is found at Ser-915. Disordered regions lie at residues 927–957 and 992–1066; these read SVGL…LNSS and PCKI…TLDL. Over residues 998–1013 the composition is skewed to polar residues; the sequence is ASPQTQRKFSLQFQRN. Residues Ser-999 and Ser-1024 each carry the phosphoserine modification. A compositionally biased stretch (polar residues) spans 1049–1063; the sequence is GSTSKLGDATKSSMT. The Protein kinase domain maps to 1224–1489; that stretch reads WLKGQQIGLG…SRELLKHPVF (266 aa). Residues 1230–1238 and Lys-1253 contribute to the ATP site; that span reads IGLGAFSSC. Asp-1350 acts as the Proton acceptor in catalysis. 2 positions are modified to phosphothreonine; by autocatalysis: Thr-1381 and Thr-1393.

It belongs to the protein kinase superfamily. STE Ser/Thr protein kinase family. MAP kinase kinase kinase subfamily. As to quaternary structure, binds both upstream activators and downstream substrates in multimolecular complexes through its N-terminus. Oligomerizes after binding MAP4K2 or TRAF2. Interacts with AXIN1. Interacts (via the kinase catalytic domain) with STK38. Interacts with GRIPAP1. Mg(2+) serves as cofactor. Post-translationally, autophosphorylated. As to expression, highly expressed in the heart and spleen while a lower level expression is seen in the liver.

The catalysed reaction is L-seryl-[protein] + ATP = O-phospho-L-seryl-[protein] + ADP + H(+). It carries out the reaction L-threonyl-[protein] + ATP = O-phospho-L-threonyl-[protein] + ADP + H(+). Its activity is regulated as follows. Activated by autophosphorylation on Thr-1381 and Thr-1393 following oligomerization. Component of a protein kinase signal transduction cascade. Activates the ERK and JNK kinase pathways by phosphorylation of MAP2K1 and MAP2K4. May phosphorylate the MAPK8/JNK1 kinase. Activates CHUK and IKBKB, the central protein kinases of the NF-kappa-B pathway. The polypeptide is Mitogen-activated protein kinase kinase kinase 1 (Map3k1) (Mus musculus (Mouse)).